The chain runs to 372 residues: PqqA peptide cyclase (372 aa).

A Radical SAM core domain is found at 4–219 (APPPLSVLLE…VDTARRELGD (216 aa)). [4Fe-4S] cluster is bound by residues C18, C22, and C25. The tract at residues 342–372 (ATAEREAAAPAPEFIYRRPERPAPATADTLE) is disordered.

Belongs to the radical SAM superfamily. PqqE family. As to quaternary structure, interacts with PqqD. The interaction is necessary for activity of PqqE. [4Fe-4S] cluster serves as cofactor.

It carries out the reaction [PQQ precursor protein] + S-adenosyl-L-methionine = E-Y cross-linked-[PQQ precursor protein] + 5'-deoxyadenosine + L-methionine + H(+). It participates in cofactor biosynthesis; pyrroloquinoline quinone biosynthesis. Its function is as follows. Catalyzes the cross-linking of a glutamate residue and a tyrosine residue in the PqqA protein as part of the biosynthesis of pyrroloquinoline quinone (PQQ). In Xanthomonas oryzae pv. oryzae (strain MAFF 311018), this protein is PqqA peptide cyclase.